The sequence spans 145 residues: Large ribosomal subunit protein uL15 (145 aa).

A disordered region spans residues 1–52 (MRLNTLSPAAGSKRVKHRPGRGIGSGLGKTGGRGVKGQTSRSGGGKVRNGFE). Gly residues-rich tracts occupy residues 21–35 (RGIG…GRGV) and 42–52 (SGGGKVRNGFE).

Belongs to the universal ribosomal protein uL15 family. In terms of assembly, part of the 50S ribosomal subunit.

Binds to the 23S rRNA. The chain is Large ribosomal subunit protein uL15 from Aeromonas hydrophila subsp. hydrophila (strain ATCC 7966 / DSM 30187 / BCRC 13018 / CCUG 14551 / JCM 1027 / KCTC 2358 / NCIMB 9240 / NCTC 8049).